The following is a 137-amino-acid chain: Molluscan insulin-related peptide 2 (137 aa).

The first 31 residues, 1–31 (MVGVRLVFTNAFVVTVLLTLLLDVVVKPAEG), serve as a signal peptide directing secretion. Q32 bears the Pyrrolidone carboxylic acid mark. Intrachain disulfides connect C47/C123, C59/C136, and C122/C127. The propeptide at 71 to 83 (DAETGWLLPETMV) is C-beta peptide like. Positions 86 to 110 (NAETDLDDPLRNIKLSSESALTYLT) are cleaved as a propeptide — C-alpha peptide like. At Q113 the chain carries Pyrrolidone carboxylic acid.

It belongs to the insulin family. Heterodimer of a B chain and an A chain linked by two disulfide bonds. In terms of tissue distribution, expressed in the cerebral light-green cells which are giant neuroendocrines cells involved in the control of growth.

The protein localises to the cytoplasmic vesicle. It is found in the secretory vesicle. The sequence is that of Molluscan insulin-related peptide 2 from Lymnaea stagnalis (Great pond snail).